Here is a 640-residue protein sequence, read N- to C-terminus: Threonine--tRNA ligase (640 aa).

Residues 1–61 (MPIITLPDGS…DRDATLQIIT (61 aa)) form the TGS domain. The catalytic stretch occupies residues 242–533 (DHRRIGKQLD…LIEHYAGAFP (292 aa)). Positions 333, 384, and 510 each coordinate Zn(2+).

It belongs to the class-II aminoacyl-tRNA synthetase family. As to quaternary structure, homodimer. The cofactor is Zn(2+).

It is found in the cytoplasm. It catalyses the reaction tRNA(Thr) + L-threonine + ATP = L-threonyl-tRNA(Thr) + AMP + diphosphate + H(+). Functionally, catalyzes the attachment of threonine to tRNA(Thr) in a two-step reaction: L-threonine is first activated by ATP to form Thr-AMP and then transferred to the acceptor end of tRNA(Thr). Also edits incorrectly charged L-seryl-tRNA(Thr). This chain is Threonine--tRNA ligase, found in Pseudomonas aeruginosa (strain LESB58).